The following is a 937-amino-acid chain: Periplasmic nitrate reductase (937 aa).

Residues 1 to 31 constitute a signal peptide (tat-type signal); the sequence is MSMNRREFLKTTAAAAAASAVGISIPSEAKA. The region spanning 40–96 is the 4Fe-4S Mo/W bis-MGD-type domain; sequence WQWDKAVCRFCGTGCGIMVAVKDDKIVAVKGDPESPVNRGINCIKGYFNAKIMYGAD. [4Fe-4S] cluster is bound by residues cysteine 47, cysteine 50, cysteine 54, and cysteine 82. Mo-bis(molybdopterin guanine dinucleotide) is bound by residues lysine 84, glutamine 152, asparagine 177, cysteine 181, 214-221, methionine 422, glutamine 426, asparagine 532, lysine 580, aspartate 607, and 827-836; these read WGANMAEM and TGRVLEHWHS. Tryptophan 903 lines the substrate pocket. 2 residues coordinate Mo-bis(molybdopterin guanine dinucleotide): asparagine 911 and lysine 928.

Belongs to the prokaryotic molybdopterin-containing oxidoreductase family. NasA/NapA/NarB subfamily. Component of the periplasmic nitrate reductase NapAB complex composed of NapA and NapB. It depends on [4Fe-4S] cluster as a cofactor. Requires Mo-bis(molybdopterin guanine dinucleotide) as cofactor. Post-translationally, predicted to be exported by the Tat system. The position of the signal peptide cleavage has not been experimentally proven.

It is found in the periplasm. The catalysed reaction is 2 Fe(II)-[cytochrome] + nitrate + 2 H(+) = 2 Fe(III)-[cytochrome] + nitrite + H2O. In terms of biological role, catalytic subunit of the periplasmic nitrate reductase complex NapAB. Receives electrons from NapB and catalyzes the reduction of nitrate to nitrite. The protein is Periplasmic nitrate reductase of Nautilia profundicola (strain ATCC BAA-1463 / DSM 18972 / AmH).